Here is a 362-residue protein sequence, read N- to C-terminus: Glutaminase-asparaginase (362 aa).

Residues 1-25 form the signal peptide; that stretch reads MNAALKTFAPSALALLLILPSSASA. In terms of domain architecture, Asparaginase/glutaminase spans 35 to 362; the sequence is ANVVILATGG…KELQRIFWEY (328 aa). Thr-45 functions as the Acyl-ester intermediate in the catalytic mechanism. Substrate contacts are provided by residues Ser-92 and 125-126; that span reads TD.

The protein belongs to the asparaginase 1 family. Homotetramer.

The protein resides in the periplasm. It carries out the reaction L-glutamine + H2O = L-glutamate + NH4(+). It catalyses the reaction L-asparagine + H2O = L-aspartate + NH4(+). This chain is Glutaminase-asparaginase (ansB), found in Pseudomonas putida (strain ATCC 47054 / DSM 6125 / CFBP 8728 / NCIMB 11950 / KT2440).